We begin with the raw amino-acid sequence, 177 residues long: Peptide methionine sulfoxide reductase MsrA (177 aa).

Cysteine 14 is an active-site residue.

This sequence belongs to the MsrA Met sulfoxide reductase family.

The catalysed reaction is L-methionyl-[protein] + [thioredoxin]-disulfide + H2O = L-methionyl-(S)-S-oxide-[protein] + [thioredoxin]-dithiol. The enzyme catalyses [thioredoxin]-disulfide + L-methionine + H2O = L-methionine (S)-S-oxide + [thioredoxin]-dithiol. Has an important function as a repair enzyme for proteins that have been inactivated by oxidation. Catalyzes the reversible oxidation-reduction of methionine sulfoxide in proteins to methionine. The protein is Peptide methionine sulfoxide reductase MsrA of Bacillus velezensis (strain DSM 23117 / BGSC 10A6 / LMG 26770 / FZB42) (Bacillus amyloliquefaciens subsp. plantarum).